We begin with the raw amino-acid sequence, 252 residues long: 5-oxoprolinase subunit A (252 aa).

The protein belongs to the LamB/PxpA family. In terms of assembly, forms a complex composed of PxpA, PxpB and PxpC.

It carries out the reaction 5-oxo-L-proline + ATP + 2 H2O = L-glutamate + ADP + phosphate + H(+). Its function is as follows. Catalyzes the cleavage of 5-oxoproline to form L-glutamate coupled to the hydrolysis of ATP to ADP and inorganic phosphate. This chain is 5-oxoprolinase subunit A, found in Mycobacterium leprae (strain Br4923).